Reading from the N-terminus, the 423-residue chain is Carboxypeptidase B2 (423 aa).

The N-terminal stretch at 1-22 is a signal peptide; the sequence is MKLYSLGVLVATVLFCGEHAFA. The propeptide at 23–114 is activation peptide; that stretch reads FQRGQVLSAL…QTSNDTISPR (92 aa). 4 N-linked (GlcNAc...) asparagine glycosylation sites follow: N44, N73, N85, and N108. The 298-residue stretch at 122 to 419 folds into the Peptidase M14 domain; the sequence is QYHSLNEIYS…VAVAKIASHV (298 aa). C178 and C191 form a disulfide bridge. Zn(2+) is bound by residues H181 and E184. Residues 181–184 and R239 contribute to the substrate site; that span reads HARE. N-linked (GlcNAc...) asparagine glycosylation occurs at N241. Intrachain disulfides connect C250–C274 and C265–C279. Substrate is bound at residue 256–257; that stretch reads NR. A Zn(2+)-binding site is contributed by H310. Substrate contacts are provided by residues 311–312 and Y363; that span reads SY. The active-site Proton donor/acceptor is E385.

The protein belongs to the peptidase M14 family. The cofactor is Zn(2+).

The protein localises to the secreted. The catalysed reaction is Release of C-terminal Arg and Lys from a polypeptide.. With respect to regulation, TAFI/CPB2 is unique among carboxypeptidases in that it spontaneously inactivates with a short half-life, a property that is crucial for its role in controlling blood clot lysis. The zymogen is stabilized by interactions with the activation peptide. Release of the activation peptide increases a dynamic flap mobility and in time this leads to conformational changes that disrupt the catalytic site and expose a cryptic thrombin-cleavage site present at Arg-324. Its function is as follows. Cleaves C-terminal arginine or lysine residues from biologically active peptides such as kinins or anaphylatoxins in the circulation thereby regulating their activities. Down-regulates fibrinolysis by removing C-terminal lysine residues from fibrin that has already been partially degraded by plasmin. In Bos taurus (Bovine), this protein is Carboxypeptidase B2 (CPB2).